Here is a 133-residue protein sequence, read N- to C-terminus: Large ribosomal subunit protein bL19 (133 aa).

A disordered region spans residues 114-133 (IAERQMTAASKEEPAEKSEA). The segment covering 123–133 (SKEEPAEKSEA) has biased composition (basic and acidic residues).

This sequence belongs to the bacterial ribosomal protein bL19 family.

This protein is located at the 30S-50S ribosomal subunit interface and may play a role in the structure and function of the aminoacyl-tRNA binding site. This Phenylobacterium zucineum (strain HLK1) protein is Large ribosomal subunit protein bL19.